The chain runs to 40 residues: Photosystem II reaction center protein J (40 aa).

A helical membrane pass occupies residues 10–30 (LWLIGTVAGILVIGLVGIFFY).

It belongs to the PsbJ family. As to quaternary structure, PSII is composed of 1 copy each of membrane proteins PsbA, PsbB, PsbC, PsbD, PsbE, PsbF, PsbH, PsbI, PsbJ, PsbK, PsbL, PsbM, PsbT, PsbX, PsbY, PsbZ, Psb30/Ycf12, at least 3 peripheral proteins of the oxygen-evolving complex and a large number of cofactors. It forms dimeric complexes.

The protein resides in the plastid. Its subcellular location is the chloroplast thylakoid membrane. Its function is as follows. One of the components of the core complex of photosystem II (PSII). PSII is a light-driven water:plastoquinone oxidoreductase that uses light energy to abstract electrons from H(2)O, generating O(2) and a proton gradient subsequently used for ATP formation. It consists of a core antenna complex that captures photons, and an electron transfer chain that converts photonic excitation into a charge separation. The sequence is that of Photosystem II reaction center protein J from Marchantia polymorpha (Common liverwort).